The sequence spans 116 residues: Photosystem II reaction center Psb28 protein (116 aa).

The protein belongs to the Psb28 family. In terms of assembly, part of the photosystem II complex.

The protein resides in the plastid. It is found in the chloroplast thylakoid membrane. The sequence is that of Photosystem II reaction center Psb28 protein from Guillardia theta (Cryptophyte).